Reading from the N-terminus, the 336-residue chain is 3-isopropylmalate dehydrogenase (336 aa).

Arg87, Arg97, Arg121, and Asp211 together coordinate substrate. Positions 211, 235, and 239 each coordinate Mg(2+). Gly271–Asp283 lines the NAD(+) pocket.

The protein belongs to the isocitrate and isopropylmalate dehydrogenases family. LeuB type 2 subfamily. In terms of assembly, homodimer. Mg(2+) serves as cofactor. It depends on Mn(2+) as a cofactor.

It is found in the cytoplasm. The enzyme catalyses (2R,3S)-3-isopropylmalate + NAD(+) = 4-methyl-2-oxopentanoate + CO2 + NADH. Its pathway is amino-acid biosynthesis; L-leucine biosynthesis; L-leucine from 3-methyl-2-oxobutanoate: step 3/4. Its function is as follows. Catalyzes the oxidation of 3-carboxy-2-hydroxy-4-methylpentanoate (3-isopropylmalate) to 3-carboxy-4-methyl-2-oxopentanoate. The product decarboxylates to 4-methyl-2 oxopentanoate. This is 3-isopropylmalate dehydrogenase from Mycolicibacterium gilvum (strain PYR-GCK) (Mycobacterium gilvum (strain PYR-GCK)).